A 223-amino-acid polypeptide reads, in one-letter code: Neurotrophic factor BDNF precursor form (223 aa).

The signal sequence occupies residues 1–5 (SCMKA). A propeptide spanning residues 6 to 114 (APMKEVSLRG…AANMSMRVRR (109 aa)) is cleaved from the precursor. Asn-107 carries N-linked (GlcNAc...) asparagine glycosylation. Cystine bridges form between Cys-127–Cys-194 and Cys-172–Cys-223.

The protein belongs to the NGF-beta family.

It is found in the secreted. Its function is as follows. Promotes the survival of neuronal populations that are all located either in the central nervous system or directly connected to it. In Ramphotyphlops sp. (strain YPM 13663) (Blind snake), this protein is Neurotrophic factor BDNF precursor form (BDNF).